Consider the following 193-residue polypeptide: Annexin-2 receptor (193 aa).

Residues Gln78 to Lys87 are compositionally biased toward polar residues. A disordered region spans residues Gln78–Glu111.

Widely expressed. Highly expressed in lymphocytes. Expressed in both resting CD4(+) and CD8(+) T-cells.

Its function is as follows. May act as a receptor for annexin II on marrow stromal cells to induce osteoclast formation. The chain is Annexin-2 receptor (ANXA2R) from Homo sapiens (Human).